A 221-amino-acid chain; its full sequence is Retinitis pigmentosa 9 protein (221 aa).

Composition is skewed to basic and acidic residues over residues 1–10, 17–29, and 60–69; these read MSSRPGREDV, RPRE…LQRR, and IKEDETKPED. Positions 1–76 are disordered; that stretch reads MSSRPGREDV…PEDCIPDVPG (76 aa). The tract at residues 1-155 is PIM1-binding; it reads MSSRPGREDV…RDNKRHEKDV (155 aa). The segment at 104–122 adopts a CCHC-type zinc-finger fold; the sequence is QCWRCKRYGHRTGDKECPF. Lysine 129 is covalently cross-linked (Glycyl lysine isopeptide (Lys-Gly) (interchain with G-Cter in SUMO2)). Positions 147–156 are enriched in basic and acidic residues; that stretch reads DNKRHEKDVR. A disordered region spans residues 147–221; the sequence is DNKRHEKDVR…SKSNEGSDSE (75 aa). Residues 184–212 show a composition bias toward basic residues; that stretch reads KHKKKKKKEKHKKRKKEKKKKKKRKHKSS. A phosphoserine; by PIM1 mark is found at serine 212 and serine 214.

In terms of assembly, binds to PIM1. Binds to ZNHIT4. Appears to be expressed in a wide range of tissues.

The protein resides in the nucleus. Functionally, is thought to be a target protein for the PIM1 kinase. May play some roles in B-cell proliferation in association with PIM1. This is Retinitis pigmentosa 9 protein (RP9) from Homo sapiens (Human).